A 180-amino-acid polypeptide reads, in one-letter code: Adenine phosphoribosyltransferase (180 aa).

Serine 2 is modified (N-acetylserine). Serine 15 and serine 30 each carry phosphoserine. Position 60 is a phosphotyrosine (tyrosine 60). At serine 66 the chain carries Phosphoserine. Residue lysine 114 is modified to N6-acetyllysine. Residue threonine 135 is modified to Phosphothreonine.

This sequence belongs to the purine/pyrimidine phosphoribosyltransferase family. Homodimer.

The protein localises to the cytoplasm. The catalysed reaction is AMP + diphosphate = 5-phospho-alpha-D-ribose 1-diphosphate + adenine. It functions in the pathway purine metabolism; AMP biosynthesis via salvage pathway; AMP from adenine: step 1/1. Its function is as follows. Catalyzes a salvage reaction resulting in the formation of AMP, that is energically less costly than de novo synthesis. The protein is Adenine phosphoribosyltransferase of Mastomys natalensis (African soft-furred rat).